A 177-amino-acid chain; its full sequence is Disulfide bond formation protein B (177 aa).

The Cytoplasmic portion of the chain corresponds to 1–14 (MLALLKQFSEKRFV). Residues 15 to 31 (WFLLAFSSLALESTALY) traverse the membrane as a helical segment. The Periplasmic portion of the chain corresponds to 32–49 (FQYGMGLQPCVLCVYERL). Cys41 and Cys44 are disulfide-bonded. A helical membrane pass occupies residues 50-65 (AMIGLFVAGIIALLQP). Residues 66–72 (LAFILRL) lie on the Cytoplasmic side of the membrane. The chain crosses the membrane as a helical span at residues 73–90 (IALALGLFSSIKGLLISF). Residues 91–145 (RHLDLQMNPAPWKQCEFIPNFPETLPFHQWFPFIFNPTGSCNESQWSLFGLTMVQ) lie on the Periplasmic side of the membrane. Cys105 and Cys131 form a disulfide bridge. The helical transmembrane segment at 146–164 (WLVVIFSLYVVILTLLLIA) threads the bilayer. The Cytoplasmic portion of the chain corresponds to 165 to 177 (QVIKTRKQRRLFN).

Belongs to the DsbB family.

Its subcellular location is the cell inner membrane. Its function is as follows. Required for disulfide bond formation in some periplasmic proteins. Acts by oxidizing the DsbA protein. The sequence is that of Disulfide bond formation protein B from Haemophilus influenzae (strain 86-028NP).